Reading from the N-terminus, the 655-residue chain is Phosphatidylinositol-3,5-bisphosphate 3-phosphatase MTMR6 (655 aa).

The 101-residue stretch at 1 to 101 folds into the GRAM domain; sequence MEHIRTTKVE…YNSLLQLSKQ (101 aa). The segment at 2–141 is interaction with RAB1B; that stretch reads EHIRTTKVEQ…AEYERMGVPN (140 aa). At Tyr108 the chain carries Phosphotyrosine. The Myotubularin phosphatase domain occupies 124–537; sequence GWQLIDLAAE…FNFKFWRNMY (414 aa). The a 1,2-diacyl-sn-glycero-3-phospho-(1D-myo-inositol-3,5-bisphosphate) site is built by Asn286, Asn311, and Ile312. Residues Asn286, Asn311, and Ile312 each coordinate a 1,2-diacyl-sn-glycero-3-phospho-(1D-myo-inositol-3-phosphate). Cys374 acts as the Phosphocysteine intermediate in catalysis. A 1,2-diacyl-sn-glycero-3-phospho-(1D-myo-inositol-3,5-bisphosphate) contacts are provided by Ser375, Asp376, Gly377, Trp378, Asp379, Arg380, Lys416, and Arg420. Positions 375, 376, 377, 378, 379, and 380 each coordinate a 1,2-diacyl-sn-glycero-3-phospho-(1D-myo-inositol-3-phosphate). Residue Arg420 participates in a 1,2-diacyl-sn-glycero-3-phospho-(1D-myo-inositol-3-phosphate) binding. Residues 547 to 581 adopt a coiled-coil conformation; that stretch reads RQSVLNIIMNMNEQNKQLEEDVKDLEAKIKQCKSG. 3 positions are modified to phosphoserine: Ser595, Ser623, and Ser645.

Belongs to the protein-tyrosine phosphatase family. Non-receptor class myotubularin subfamily. In terms of assembly, homodimer. Heterodimer (via C-terminus) with MTMR9 (via C-terminus). Interacts with ALKBH4. Interacts with KCNN4. Interacts (via GRAM domain) with RAB1B (in GDP-bound form); the interaction regulates MTMR6 recruitment to the endoplasmic reticulum-Golgi intermediate compartment.

The protein localises to the cytoplasm. It localises to the endoplasmic reticulum. It is found in the cell projection. The protein resides in the ruffle membrane. Its subcellular location is the endoplasmic reticulum-Golgi intermediate compartment. The protein localises to the perinuclear region. It carries out the reaction a 1,2-diacyl-sn-glycero-3-phospho-(1D-myo-inositol-3,5-bisphosphate) + H2O = a 1,2-diacyl-sn-glycero-3-phospho-(1D-myo-inositol-5-phosphate) + phosphate. The enzyme catalyses a 1,2-diacyl-sn-glycero-3-phospho-(1D-myo-inositol-3-phosphate) + H2O = a 1,2-diacyl-sn-glycero-3-phospho-(1D-myo-inositol) + phosphate. The catalysed reaction is 1,2-dioctanoyl-sn-glycero-3-phospho-(1D-myo-inositol-3,5-bisphosphate) + H2O = 1,2-dioctanoyl-sn-glycero-3-phospho-(1D-myo-inositol-5-phosphate) + phosphate. It catalyses the reaction 1,2-dioctanoyl-sn-glycero-3-phospho-(1-D-myo-inositol-3-phosphate) + H2O = 1,2-dioctanoyl-sn-glycero-3-phospho-(1D-myo-inositol) + phosphate. Allosterically activated by phosphatidylserine and/or phosphatidylinositol 4-phosphate (PtdIns(4)P), and phosphatidylinositol 5-phosphate (PtdIns(5)P). Interaction with MTMR9 increases catalytic activity towards phosphatidylinositol 3,5-bisphosphate. Lipid phosphatase that specifically dephosphorylates the D-3 position of phosphatidylinositol 3-phosphate and phosphatidylinositol 3,5-bisphosphate, generating phosphatidylinositol and phosphatidylinositol 5-phosphate. Binds with high affinity to phosphatidylinositol 3,5-bisphosphate (PtdIns(3,5)P2) but also to phosphatidylinositol 3-phosphate (PtdIns(3)P), phosphatidylinositol 4-phosphate (PtdIns(4)P), and phosphatidylinositol 5-phosphate (PtdIns(5)P), phosphatidic acid and phosphatidylserine. Negatively regulates ER-Golgi protein transport. Probably in association with MTMR9, plays a role in the late stages of macropinocytosis by dephosphorylating phosphatidylinositol 3-phosphate in membrane ruffles. Acts as a negative regulator of KCNN4/KCa3.1 channel activity in CD4(+) T-cells possibly by decreasing intracellular levels of phosphatidylinositol 3-phosphate. Negatively regulates proliferation of reactivated CD4(+) T-cells. In complex with MTMR9, negatively regulates DNA damage-induced apoptosis. The formation of the MTMR6-MTMR9 complex stabilizes both MTMR6 and MTMR9 protein levels. This chain is Phosphatidylinositol-3,5-bisphosphate 3-phosphatase MTMR6, found in Rattus norvegicus (Rat).